A 418-amino-acid chain; its full sequence is Putative ion-transport protein YfeO (418 aa).

12 consecutive transmembrane segments (helical) span residues 10–30 (LLLSLPAVAIGIASSLILIVV), 54–74 (DSPLWIIGVLTLTGIAVGLVI), 99–119 (ALPGLIVALILGLAGGVSLGP), 120–140 (EHPIMTVNIALAVAIGARLLP), 149–169 (ILASAGTIGALFGTPVAAALI), 186–206 (LFAPLMAAAAGALTTGLFFHP), 223–243 (ILSGAIVAAIAIAAGMVAVWC), 258–278 (VLVLGIGGFILGILGVIGGPV), 300–320 (DYFLLAVIKLAALVVAAASGF), 322–342 (GGRIFPAVFVGVALGLMLHEH), 343–363 (VPAVPAAITVSCAILGIVLVV), and 371–391 (LFMAAVVVPNTTLLPLLCIVM).

Belongs to the chloride channel (TC 2.A.49) family.

The protein resides in the cell membrane. The protein is Putative ion-transport protein YfeO of Escherichia coli O8 (strain IAI1).